A 488-amino-acid chain; its full sequence is UL37 immediate early glycoprotein (488 aa).

Positions methionine 1–tyrosine 22 are cleaved as a signal peptide. Residues glycine 83 to asparagine 107 are compositionally biased toward acidic residues. The segment at glycine 83–alanine 119 is disordered. N-linked (GlcNAc...) asparagine; by host glycosylation is found at asparagine 206, asparagine 210, asparagine 219, asparagine 223, asparagine 242, asparagine 275, asparagine 281, asparagine 294, asparagine 297, asparagine 306, asparagine 333, asparagine 337, asparagine 343, asparagine 384, and asparagine 391. A helical transmembrane segment spans residues isoleucine 439 to glycine 459.

It belongs to the immediate early glycoprotein family. In terms of assembly, interacts with host BAX. Interacts with host RSAD2/viperin; this interaction results in RSAD2/viperin relocalization from the endoplasmic reticulum to the mitochondria, actin cytoskeleton disruption and enhancement of infection. Interacts with host PEX19; this interaction inhibits the peroxisomal-dependent antiviral signaling. Interacts with host CHCHD6; this interaction rewires mitochondria by engaging the conserved MICOS complex.

Its subcellular location is the host membrane. The protein localises to the host endoplasmic reticulum membrane. It is found in the host Golgi apparatus membrane. The protein resides in the host mitochondrion membrane. It localises to the host peroxisome. In terms of biological role, multifunctional transmembrane protein that plays several key roles in viral replication. Rapidely traffics from the host endoplasmic reticulum to the outer mitochondrial membrane where it acts to inhibit host immune response, block apoptotic signaling, regulate calcium flux, and induce mitochondrial fragmentation. Sequesters proapoptotic BAX at the outer mitochondrial membrane and prevents cytochrome c release and subsequent initiation of the proapoptotic cascade. Also provoques a calcium efflux from host endoplasmic reticulum and F-actin cytoskeleton disruption. Participates in the increase of host mitochondrial biogenesis, thus promoting viral replication by efficient use of newly made mitochondria. Additionally, a subset of vMIA localizes to peroxisomes, causing fragmentation and blocking peroxisomal MAVS signaling. Mechanistically, inhibits host MAVS oligomerization at peroxisomes in a mitochondrial fission factors (MFF)-dependent manner and in mitochondria independently of mitochondrial fission factors. Plays an essential role in the trafficking of host viperin/RSAD2 from the endoplasmic reticulum to the viral assembly compartment via the mitochondria during viral infection as failure of viperin to localize to the mitochondria results in insufficient lipogenesis and thus reduces viral replication. Functionally, may play a role in escape from the host antiviral response. The chain is UL37 immediate early glycoprotein (UL37) from Homo sapiens (Human).